Reading from the N-terminus, the 334-residue chain is Eukaryotic translation initiation factor 3 subunit H (334 aa).

Positions 21–155 constitute an MPN domain; the sequence is VQIDGLVVLK…LKAYRLTPKL (135 aa). The tract at residues 247 to 284 is disordered; it reads RNVGKQQQQKHQYTQRKQQENLQRLSRGETPLPEEDVN. Residues 251-262 show a composition bias toward low complexity; the sequence is KQQQQKHQYTQR.

Belongs to the eIF-3 subunit H family. As to quaternary structure, component of the eukaryotic translation initiation factor 3 (eIF-3) complex, which is composed of 13 subunits: eif3a, eif3b, eif3c, eif3d, eif3e, eif3f, eif3g, eif3h, eif3i, eif3j, eif3k, eif3l and eif3m.

The protein localises to the cytoplasm. Its function is as follows. Component of the eukaryotic translation initiation factor 3 (eIF-3) complex, which is involved in protein synthesis of a specialized repertoire of mRNAs and, together with other initiation factors, stimulates binding of mRNA and methionyl-tRNAi to the 40S ribosome. The eIF-3 complex specifically targets and initiates translation of a subset of mRNAs involved in cell proliferation. In Xenopus laevis (African clawed frog), this protein is Eukaryotic translation initiation factor 3 subunit H (eif3h).